Reading from the N-terminus, the 636-residue chain is MAARRTRKDDGSNWTVADSRGVYGIRHWGAGYFAINDGGNVEVRPQGADSTPIDLYELVGQLREAGLSLPLLVRFPDILQDRVRKLTGAFDANIERLEYQSRYTALYPIKVNQQEAVVENIIATENVSIGLEAGSKPELMAVLALAPKGGTIVCNGYKDREFIKLALMGQKLGHNVFIVIEKESEVQLVIEEAANVGVQPQVGLRVRLSSLASSKWADTGGEKAKFGLSAAQLLSVVERFRQAGLDQGVRLLHFHMGSQIANLADYQHGFKEAIRYYGELRALGLPVDHIDVGGGLGVDYDGTHSRNASSINYDIDDYAGVVVGMLKEFCDAQGLPHPHIFSESGRALTAHHAVLITQVTDVERHNDDVPKIVDLDEQPEIVRWLAELLGPTDAEMVTETYWRATHYIGDAAAQYADGKISLAQKALAEQCYFAICRRLHNQLKARQRSHRQVLDELNDKLADKYICNFSVFQSLPDTWAIGQVLPILPLHRLGEEPDRRAVLQDLTCDSDGKITQYVDEQSIETSLPVHEVKEGEDYLIGVFLVGAYQEILGDMHNLFGDTDSVNVYQRADGGIYHAGIETHDTIEDMLRYVHLSPEELMTLYRDKVAGAKLTARERNQYLDALRLGLTRSAYLS.

Lys110 carries the post-translational modification N6-(pyridoxal phosphate)lysine. 290–300 (IDVGGGLGVDY) serves as a coordination point for substrate.

Belongs to the Orn/Lys/Arg decarboxylase class-II family. SpeA subfamily. Mg(2+) serves as cofactor. It depends on pyridoxal 5'-phosphate as a cofactor.

It carries out the reaction L-arginine + H(+) = agmatine + CO2. Its function is as follows. Catalyzes the biosynthesis of agmatine from arginine. The protein is Biosynthetic arginine decarboxylase of Pseudomonas aeruginosa (strain ATCC 15692 / DSM 22644 / CIP 104116 / JCM 14847 / LMG 12228 / 1C / PRS 101 / PAO1).